We begin with the raw amino-acid sequence, 101 residues long: Small ribosomal subunit protein uS10 (101 aa).

This sequence belongs to the universal ribosomal protein uS10 family. As to quaternary structure, part of the 30S ribosomal subunit.

Involved in the binding of tRNA to the ribosomes. The protein is Small ribosomal subunit protein uS10 of Phocaeicola vulgatus (strain ATCC 8482 / DSM 1447 / JCM 5826 / CCUG 4940 / NBRC 14291 / NCTC 11154) (Bacteroides vulgatus).